The following is a 225-amino-acid chain: NAD(P)H-quinone oxidoreductase subunit K, chloroplastic (225 aa).

Residues C43, C44, C108, and C139 each contribute to the [4Fe-4S] cluster site.

It belongs to the complex I 20 kDa subunit family. NDH is composed of at least 16 different subunits, 5 of which are encoded in the nucleus. [4Fe-4S] cluster is required as a cofactor.

Its subcellular location is the plastid. It is found in the chloroplast thylakoid membrane. It carries out the reaction a plastoquinone + NADH + (n+1) H(+)(in) = a plastoquinol + NAD(+) + n H(+)(out). It catalyses the reaction a plastoquinone + NADPH + (n+1) H(+)(in) = a plastoquinol + NADP(+) + n H(+)(out). Its function is as follows. NDH shuttles electrons from NAD(P)H:plastoquinone, via FMN and iron-sulfur (Fe-S) centers, to quinones in the photosynthetic chain and possibly in a chloroplast respiratory chain. The immediate electron acceptor for the enzyme in this species is believed to be plastoquinone. Couples the redox reaction to proton translocation, and thus conserves the redox energy in a proton gradient. This Fagopyrum esculentum subsp. ancestrale (Wild buckwheat) protein is NAD(P)H-quinone oxidoreductase subunit K, chloroplastic.